A 133-amino-acid chain; its full sequence is Cytochrome b5 (133 aa).

Residues 4–86 (EKEYILDEIS…LKNYLVGNFK (83 aa)) form the Cytochrome b5 heme-binding domain. Positions 45 and 69 each coordinate heme. The helical transmembrane segment at 108 to 128 (SGTGIMLIVLMALFAIAYGYY) threads the bilayer.

The protein belongs to the cytochrome b5 family. In terms of assembly, interacts with alternative squalene epoxidase PHATRDRAFT_45494.

The protein resides in the endoplasmic reticulum membrane. Its function is as follows. Hemoprotein that functions as an electron carrier for membrane bound monooxygenases involved in sterol biosynthesis. The protein is Cytochrome b5 of Phaeodactylum tricornutum (strain CCAP 1055/1).